A 904-amino-acid chain; its full sequence is uncharacterized protein (904 aa).

Disordered stretches follow at residues 247–275 and 328–360; these read KIGKSRTTEDVSMPPLHRGVGTPANSLEF and GDSQTPGLHYPPTAGAQTLSPTSHPSSANHHFS. Residues 342–360 are compositionally biased toward polar residues; that stretch reads GAQTLSPTSHPSSANHHFS. The chain crosses the membrane as a helical span at residues 778-798; that stretch reads VVQGMILMFAGGKLIFGGRVL.

It is found in the membrane. This is an uncharacterized protein from Homo sapiens (Human).